Reading from the N-terminus, the 207-residue chain is Guanylate kinase (207 aa).

Residues 4 to 184 (GTLYIVSAPS…ALMDFKAILR (181 aa)) enclose the Guanylate kinase-like domain. Position 11–18 (11–18 (APSGAGKS)) interacts with ATP.

This sequence belongs to the guanylate kinase family.

The protein localises to the cytoplasm. The enzyme catalyses GMP + ATP = GDP + ADP. Functionally, essential for recycling GMP and indirectly, cGMP. This Vibrio parahaemolyticus serotype O3:K6 (strain RIMD 2210633) protein is Guanylate kinase.